The sequence spans 569 residues: Glutamate--tRNA ligase, chloroplastic/mitochondrial (569 aa).

L-glutamate is bound at residue 59 to 61 (RFA). The 'HIGH' region signature appears at 62-72 (PSPTGNLHVGG). An ATP-binding site is contributed by histidine 69. L-glutamate is bound by residues glutamate 95, 247–251 (YNFCV), and arginine 265. Residues glutamate 268 and 303 to 307 (KLSKR) contribute to the ATP site. The 'KMSKS' region motif lies at 303–307 (KLSKR).

The protein belongs to the class-I aminoacyl-tRNA synthetase family. Glutamate--tRNA ligase type 1 subfamily.

It is found in the plastid. Its subcellular location is the chloroplast. The protein localises to the mitochondrion. The enzyme catalyses tRNA(Glu) + L-glutamate + ATP = L-glutamyl-tRNA(Glu) + AMP + diphosphate. Its function is as follows. Catalyzes the attachment of glutamate to tRNA(Glu) in a two-step reaction: glutamate is first activated by ATP to form Glu-AMP and then transferred to the acceptor end of tRNA(Glu). In Nicotiana tabacum (Common tobacco), this protein is Glutamate--tRNA ligase, chloroplastic/mitochondrial.